The chain runs to 118 residues: MSQLKGQNLIESVNQHQLKDVPFFKPGDTVKVFIKIDEGNRKRVQIFEGLVIKRQGRLVTETFTVRKIFAGVGIELTFPVHSPTNEKIEVVRRGIVRRAKLHYVRNLSSKASRIKEQR.

This sequence belongs to the bacterial ribosomal protein bL19 family.

Functionally, this protein is located at the 30S-50S ribosomal subunit interface and may play a role in the structure and function of the aminoacyl-tRNA binding site. This is Large ribosomal subunit protein bL19 from Onion yellows phytoplasma (strain OY-M).